Reading from the N-terminus, the 345-residue chain is CRISPR-associated endonuclease Cas1 1 (345 aa).

A divalent metal cation contacts are provided by Glu-168, His-239, and Glu-254.

The protein belongs to the CRISPR-associated endonuclease Cas1 family. Forms a heterotetramer with a Cas2 homodimer. Homodimer. A divalent metal cation is required as a cofactor.

In terms of biological role, CRISPR (clustered regularly interspaced short palindromic repeat), is an adaptive immune system that provides protection against mobile genetic elements (viruses, transposable elements and conjugative plasmids). CRISPR clusters contain sequences complementary to antecedent mobile elements and target invading nucleic acids. CRISPR clusters are transcribed and processed into CRISPR RNA (crRNA). Involved in the integration of spacer DNA into the CRISPR cassette. Acts as a dsDNA and ssRNA nuclease, binds to linear and circular dsDNA and linear ssRNA and ssDNA. The polypeptide is CRISPR-associated endonuclease Cas1 1 (Archaeoglobus fulgidus (strain ATCC 49558 / DSM 4304 / JCM 9628 / NBRC 100126 / VC-16)).